The sequence spans 391 residues: Processive diacylglycerol beta-glucosyltransferase (391 aa).

Belongs to the glycosyltransferase 28 family. UgtP subfamily.

It is found in the cell membrane. The enzyme catalyses a 1,2-diacyl-3-O-(beta-D-glucopyranosyl)-sn-glycerol + UDP-alpha-D-glucose = a 1,2-diacyl-3-O-(beta-D-Glc-(1-&gt;6)-beta-D-Glc)-sn-glycerol + UDP + H(+). The catalysed reaction is a 1,2-diacyl-sn-glycerol + UDP-alpha-D-glucose = a 1,2-diacyl-3-O-(beta-D-glucopyranosyl)-sn-glycerol + UDP + H(+). It participates in glycolipid metabolism; diglucosyl-diacylglycerol biosynthesis. Processive glucosyltransferase involved in the biosynthesis of both the bilayer- and non-bilayer-forming membrane glucolipids. Is able to successively transfer two glucosyl residues to diacylglycerol (DAG), thereby catalyzing the formation of beta-monoglucosyl-DAG (3-O-(beta-D-glucopyranosyl)-1,2-diacyl-sn-glycerol) and beta-diglucosyl-DAG (3-O-(beta-D-glucopyranosyl-beta-(1-&gt;6)-D-glucopyranosyl)-1,2-diacyl-sn-glycerol). Beta-diglucosyl-DAG is the predominant glycolipid found in Bacillales and is also used as a membrane anchor for lipoteichoic acid (LTA). The polypeptide is Processive diacylglycerol beta-glucosyltransferase (Staphylococcus haemolyticus (strain JCSC1435)).